The primary structure comprises 475 residues: Zinc finger protein 383 (475 aa).

The KRAB domain occupies 6–77 (VMFSDVSIDF…GRELTRGLCS (72 aa)). 11 C2H2-type zinc fingers span residues 170–192 (FECKKCGKAFSQNSQFIQHQRIH), 198–220 (YECKECGKFFSCGSHVTRHLKIH), 226–248 (FECKECGKAFSCSSYLSQHQRIH), 254–276 (YECKECGKAFSYCSNLIDHQRIH), 282–304 (YACKVCGKAFTKSSQLFQHVRIH), 310–332 (YECKECGKAFTQSSKLVQHQRIH), 338–360 (YECKECGKAFSSGSALTNHQRIH), 366–388 (YDCKECGKAFTQSSQLRQHQRIH), 394–416 (FECLECGKAFTQNSQLFQHQRIH), 422–444 (YECNECGKAFNKCSNLTRHLRIH), and 450–472 (YNCKECGKAFSSGSDLIRHQGIH).

Belongs to the krueppel C2H2-type zinc-finger protein family.

It localises to the nucleus. Its subcellular location is the cytoplasm. Its function is as follows. May function as a transcriptional repressor, suppressing transcriptional activities mediated by MAPK signaling pathways. This Macaca fascicularis (Crab-eating macaque) protein is Zinc finger protein 383 (ZNF383).